Here is a 105-residue protein sequence, read N- to C-terminus: Biogenesis of lysosome-related organelles complex 1 subunit SNN1 (105 aa).

Residues 70 to 105 (WKDDNERLDSLRKRVDSLKSRFQSLKLRSDKLEQRE) are a coiled coil.

The protein belongs to the SNAPIN family. In terms of assembly, component of the biogenesis of lysosome-related organelles complex-1 (BLOC-1).

It is found in the endosome. In terms of biological role, component of the biogenesis of lysosome-related organelles complex-1 (BLOC-1), a complex involved in endosomal cargo sorting. This is Biogenesis of lysosome-related organelles complex 1 subunit SNN1 (SNN1) from Zygosaccharomyces rouxii (strain ATCC 2623 / CBS 732 / NBRC 1130 / NCYC 568 / NRRL Y-229).